We begin with the raw amino-acid sequence, 30 residues long: Photosystem I reaction center subunit XII (30 aa).

The chain crosses the membrane as a helical span at residues 7–26 (IFVALLFALVSAVLAIRLGK).

The protein belongs to the PsaM family.

Its subcellular location is the plastid. It localises to the chloroplast thylakoid membrane. The protein is Photosystem I reaction center subunit XII of Porphyra purpurea (Red seaweed).